A 189-amino-acid chain; its full sequence is Putative L,D-transpeptidase in ATP synthase subunits region ORF 5 (189 aa).

A signal peptide (tat-type signal) is located at residues 1–35 (MTDTLNRRAAMALGLASAAGAALATPALSQDAAPA). Residues 59–189 (PMLVADTFSR…CPVGTRVRVI (131 aa)) enclose the L,D-TPase catalytic domain. H149 (proton donor/acceptor) is an active-site residue. The Nucleophile role is filled by C165.

Belongs to the YkuD family. Predicted to be exported by the Tat system. The position of the signal peptide cleavage has not been experimentally proven.

The protein operates within cell wall biogenesis; peptidoglycan biosynthesis. This Fuscovulum blasticum (Rhodobacter blasticus) protein is Putative L,D-transpeptidase in ATP synthase subunits region ORF 5.